Reading from the N-terminus, the 177-residue chain is Large ribosomal subunit protein uL6 (177 aa).

It belongs to the universal ribosomal protein uL6 family. Part of the 50S ribosomal subunit.

Functionally, this protein binds to the 23S rRNA, and is important in its secondary structure. It is located near the subunit interface in the base of the L7/L12 stalk, and near the tRNA binding site of the peptidyltransferase center. The protein is Large ribosomal subunit protein uL6 of Rhizobium etli (strain CIAT 652).